We begin with the raw amino-acid sequence, 98 residues long: uncharacterized protein (98 aa).

The N-terminal stretch at 1-23 is a signal peptide; the sequence is MKKMQSIVLALSLVLVAPMAAQA. Residues 68–98 form a disordered region; that stretch reads WHLHGPPPPPRHHKKAPHDHHGGHGPGKHHR. The segment covering 77–98 has biased composition (basic residues); it reads PRHHKKAPHDHHGGHGPGKHHR.

To E.coli YpeC.

This is an uncharacterized protein from Escherichia coli (strain K12).